Consider the following 77-residue polypeptide: U8-lycotoxin-Ls1h (77 aa).

Residues 1-20 form the signal peptide; it reads MKLIIFTGLVLFAIVSLIEV. Residues 21–26 constitute a propeptide that is removed on maturation; sequence QADNER.

Belongs to the neurotoxin 19 (CSTX) family. 08 (U8-Lctx) subfamily. Post-translationally, contains 4 disulfide bonds. As to expression, expressed by the venom gland.

It is found in the secreted. This is U8-lycotoxin-Ls1h from Lycosa singoriensis (Wolf spider).